The primary structure comprises 148 residues: Ribonuclease H (148 aa).

Positions 3–144 (DKEQVVIYTD…ADQLANRGVA (142 aa)) constitute an RNase H type-1 domain. Mg(2+) contacts are provided by D12, E50, D72, and D136. The segment at 125–148 (GHTGDPGNERADQLANRGVAELPR) is disordered.

Belongs to the RNase H family. In terms of assembly, monomer. It depends on Mg(2+) as a cofactor.

The protein resides in the cytoplasm. The enzyme catalyses Endonucleolytic cleavage to 5'-phosphomonoester.. In terms of biological role, endonuclease that specifically degrades the RNA of RNA-DNA hybrids. The sequence is that of Ribonuclease H from Pseudomonas aeruginosa (strain LESB58).